The following is a 402-amino-acid chain: Serine/threonine-protein phosphatase 4 regulatory subunit 2 (402 aa).

Residues 206-248 (MDEEFEDEDYEDHEDEEEDEEDEDNDSDVDEMEAEEVEEDASD) show a composition bias toward acidic residues. 3 disordered regions span residues 206-270 (MDEE…DVTD), 291-311 (SVLS…ILSR), and 331-402 (GFIT…KKRM). The span at 348-358 (SSSSMVSPVVS) shows a compositional bias: low complexity. Polar residues predominate over residues 371 to 396 (INTFISPDTTNSVTQAEKNELSTSPL).

This sequence belongs to the PPP4R2 family. Regulatory subunit (R2) of the histone H2A phosphatase complex (HTP-C) consisting of PPH3, PSY2 and PSY4.

The protein localises to the nucleus. In terms of biological role, regulatory subunit of the histone H2A phosphatase complex, which dephosphorylates H2AS128ph (gamma-H2A) that has been displaced from sites of DNA lesions in the double-stranded DNA break repair process. Dephosphorylation is necessary for efficient recovery from the DNA damage checkpoint. This chain is Serine/threonine-protein phosphatase 4 regulatory subunit 2 (PSY4), found in Kluyveromyces lactis (strain ATCC 8585 / CBS 2359 / DSM 70799 / NBRC 1267 / NRRL Y-1140 / WM37) (Yeast).